A 292-amino-acid polypeptide reads, in one-letter code: ATP phosphoribosyltransferase (292 aa).

It belongs to the ATP phosphoribosyltransferase family. Long subfamily. Mg(2+) is required as a cofactor.

The protein resides in the cytoplasm. It catalyses the reaction 1-(5-phospho-beta-D-ribosyl)-ATP + diphosphate = 5-phospho-alpha-D-ribose 1-diphosphate + ATP. Its pathway is amino-acid biosynthesis; L-histidine biosynthesis; L-histidine from 5-phospho-alpha-D-ribose 1-diphosphate: step 1/9. Its activity is regulated as follows. Feedback inhibited by histidine. Functionally, catalyzes the condensation of ATP and 5-phosphoribose 1-diphosphate to form N'-(5'-phosphoribosyl)-ATP (PR-ATP). Has a crucial role in the pathway because the rate of histidine biosynthesis seems to be controlled primarily by regulation of HisG enzymatic activity. In Desulfatibacillum aliphaticivorans, this protein is ATP phosphoribosyltransferase.